The sequence spans 513 residues: ATP synthase subunit alpha (513 aa).

169–176 (GDRQTGKT) provides a ligand contact to ATP.

The protein belongs to the ATPase alpha/beta chains family. In terms of assembly, F-type ATPases have 2 components, CF(1) - the catalytic core - and CF(0) - the membrane proton channel. CF(1) has five subunits: alpha(3), beta(3), gamma(1), delta(1), epsilon(1). CF(0) has three main subunits: a(1), b(2) and c(9-12). The alpha and beta chains form an alternating ring which encloses part of the gamma chain. CF(1) is attached to CF(0) by a central stalk formed by the gamma and epsilon chains, while a peripheral stalk is formed by the delta and b chains.

The protein localises to the cell inner membrane. The enzyme catalyses ATP + H2O + 4 H(+)(in) = ADP + phosphate + 5 H(+)(out). Functionally, produces ATP from ADP in the presence of a proton gradient across the membrane. The alpha chain is a regulatory subunit. This chain is ATP synthase subunit alpha, found in Escherichia coli O81 (strain ED1a).